A 362-amino-acid polypeptide reads, in one-letter code: Olfactory receptor 5AU1 (362 aa).

Topologically, residues 1-79 are extracellular; that stretch reads MTEFHLQSQM…TDPQLQRLLF (79 aa). An N-linked (GlcNAc...) asparagine glycan is attached at N56. The helical transmembrane segment at 80 to 100 threads the bilayer; that stretch reads VVFLGMYTATLLGNLVMFLLI. Over 101–116 the chain is Cytoplasmic; that stretch reads HVSATLHTPMYSLLKS. Residues 117–139 form a helical membrane-spanning segment; that stretch reads LSFLDFCYSSTVVPQTLVNFLAK. At 140–150 the chain is on the extracellular side; that stretch reads RKVISYFGCMT. A disulfide bond links C148 and C230. The chain crosses the membrane as a helical span at residues 151–171; sequence QMFFYAGFATSECYLIAAMAY. At 172–194 the chain is on the cytoplasmic side; sequence DRYAAICNPLLYSTIMSPEVCAS. A helical transmembrane segment spans residues 195 to 215; sequence LIVGSYSAGFLNSLIHTGCIF. Over 216–247 the chain is Extracellular; it reads SLKFCGAHVVTHFFCDGPPILSLSCVDTSLCE. Residues 248–268 traverse the membrane as a helical segment; sequence ILLFIFAGFNLLSCTLTILIS. Residues 269-290 are Cytoplasmic-facing; it reads YFLILNTILKMSSAQGRFKAFS. Residues 291–311 form a helical membrane-spanning segment; it reads TCASHLTAICLFFGTTLFMYL. The Extracellular segment spans residues 312–322; sequence RPRSSYSLTQD. The helical transmembrane segment at 323–343 threads the bilayer; that stretch reads RTVAVIYTVVIPVLNPLMYSL. At 344-362 the chain is on the cytoplasmic side; it reads RNKDVKKALIKVWGRKTME.

The protein belongs to the G-protein coupled receptor 1 family.

It localises to the cell membrane. Its function is as follows. Odorant receptor. This Homo sapiens (Human) protein is Olfactory receptor 5AU1 (OR5AU1).